A 278-amino-acid chain; its full sequence is Sulfur carrier protein FdhD (278 aa).

Catalysis depends on Cys-121, which acts as the Cysteine persulfide intermediate. 260 to 265 (FCKPGR) contributes to the Mo-bis(molybdopterin guanine dinucleotide) binding site.

This sequence belongs to the FdhD family.

The protein resides in the cytoplasm. In terms of biological role, required for formate dehydrogenase (FDH) activity. Acts as a sulfur carrier protein that transfers sulfur from IscS to the molybdenum cofactor prior to its insertion into FDH. In Klebsiella pneumoniae subsp. pneumoniae (strain ATCC 700721 / MGH 78578), this protein is Sulfur carrier protein FdhD.